A 135-amino-acid polypeptide reads, in one-letter code: D-ribose pyranase (135 aa).

The active-site Proton donor is histidine 20. Residues aspartate 28, histidine 102, and 124-126 contribute to the substrate site; that span reads YSN.

The protein belongs to the RbsD / FucU family. RbsD subfamily. As to quaternary structure, homodecamer.

It localises to the cytoplasm. The enzyme catalyses beta-D-ribopyranose = beta-D-ribofuranose. The protein operates within carbohydrate metabolism; D-ribose degradation; D-ribose 5-phosphate from beta-D-ribopyranose: step 1/2. Catalyzes the interconversion of beta-pyran and beta-furan forms of D-ribose. In Thermotoga petrophila (strain ATCC BAA-488 / DSM 13995 / JCM 10881 / RKU-1), this protein is D-ribose pyranase.